Here is a 390-residue protein sequence, read N- to C-terminus: Chorismate synthase (390 aa).

The NADP(+) site is built by Arg-39 and Arg-45. Residues 132–134 (RSS), 253–254 (NA), Gly-298, 313–317 (KPIPT), and Arg-339 contribute to the FMN site.

It belongs to the chorismate synthase family. In terms of assembly, homotetramer. FMNH2 is required as a cofactor.

The catalysed reaction is 5-O-(1-carboxyvinyl)-3-phosphoshikimate = chorismate + phosphate. Its pathway is metabolic intermediate biosynthesis; chorismate biosynthesis; chorismate from D-erythrose 4-phosphate and phosphoenolpyruvate: step 7/7. Functionally, catalyzes the anti-1,4-elimination of the C-3 phosphate and the C-6 proR hydrogen from 5-enolpyruvylshikimate-3-phosphate (EPSP) to yield chorismate, which is the branch point compound that serves as the starting substrate for the three terminal pathways of aromatic amino acid biosynthesis. This reaction introduces a second double bond into the aromatic ring system. In Bacillus licheniformis (strain ATCC 14580 / DSM 13 / JCM 2505 / CCUG 7422 / NBRC 12200 / NCIMB 9375 / NCTC 10341 / NRRL NRS-1264 / Gibson 46), this protein is Chorismate synthase.